We begin with the raw amino-acid sequence, 66 residues long: Large ribosomal subunit protein uL29 (66 aa).

Belongs to the universal ribosomal protein uL29 family.

In Allorhizobium ampelinum (strain ATCC BAA-846 / DSM 112012 / S4) (Agrobacterium vitis (strain S4)), this protein is Large ribosomal subunit protein uL29.